A 41-amino-acid polypeptide reads, in one-letter code: Large ribosomal subunit protein bL36 (41 aa).

Belongs to the bacterial ribosomal protein bL36 family.

This is Large ribosomal subunit protein bL36 from Azorhizobium caulinodans (strain ATCC 43989 / DSM 5975 / JCM 20966 / LMG 6465 / NBRC 14845 / NCIMB 13405 / ORS 571).